The primary structure comprises 546 residues: CCA tRNA nucleotidyltransferase, mitochondrial (546 aa).

It belongs to the tRNA nucleotidyltransferase/poly(A) polymerase family.

It localises to the mitochondrion. The protein resides in the cytoplasm. The protein localises to the nucleus. It catalyses the reaction a tRNA precursor + 2 CTP + ATP = a tRNA with a 3' CCA end + 3 diphosphate. Nucleotidyltransferase that catalyzes the addition and repair of the essential 3'-terminal CCA sequence in tRNAs, which is necessary for the attachment of amino acids to the 3' terminus of tRNA molecules, using CTP and ATP as substrates. tRNA 3'-terminal CCA addition is required both for tRNA processing and repair. Also involved in tRNA surveillance by mediating tandem CCA addition to generate a CCACCA at the 3' terminus of unstable tRNAs. While stable tRNAs receive only 3'-terminal CCA, unstable tRNAs are marked with CCACCA and rapidly degraded. The structural flexibility of RNA controls the choice between CCA versus CCACCA addition: following the first CCA addition cycle, nucleotide-binding to the active site triggers a clockwise screw motion, producing torque on the RNA. This ejects stable RNAs, whereas unstable RNAs are refolded while bound to the enzyme and subjected to a second CCA catalytic cycle. The protein is CCA tRNA nucleotidyltransferase, mitochondrial (CCA1) of Saccharomyces cerevisiae (strain ATCC 204508 / S288c) (Baker's yeast).